A 416-amino-acid chain; its full sequence is Serine hydroxymethyltransferase (416 aa).

Residues L118 and 122-124 each bind (6S)-5,6,7,8-tetrahydrofolate; that span reads GHL. K226 bears the N6-(pyridoxal phosphate)lysine mark. (6S)-5,6,7,8-tetrahydrofolate-binding positions include E242 and 350 to 352; that span reads SPF.

The protein belongs to the SHMT family. As to quaternary structure, homodimer. The cofactor is pyridoxal 5'-phosphate.

The protein localises to the cytoplasm. The enzyme catalyses (6R)-5,10-methylene-5,6,7,8-tetrahydrofolate + glycine + H2O = (6S)-5,6,7,8-tetrahydrofolate + L-serine. It functions in the pathway one-carbon metabolism; tetrahydrofolate interconversion. The protein operates within amino-acid biosynthesis; glycine biosynthesis; glycine from L-serine: step 1/1. Functionally, catalyzes the reversible interconversion of serine and glycine with tetrahydrofolate (THF) serving as the one-carbon carrier. This reaction serves as the major source of one-carbon groups required for the biosynthesis of purines, thymidylate, methionine, and other important biomolecules. Also exhibits THF-independent aldolase activity toward beta-hydroxyamino acids, producing glycine and aldehydes, via a retro-aldol mechanism. This Helicobacter hepaticus (strain ATCC 51449 / 3B1) protein is Serine hydroxymethyltransferase.